We begin with the raw amino-acid sequence, 329 residues long: Phosphate acyltransferase (329 aa).

It belongs to the PlsX family. As to quaternary structure, homodimer. Probably interacts with PlsY.

It is found in the cytoplasm. It carries out the reaction a fatty acyl-[ACP] + phosphate = an acyl phosphate + holo-[ACP]. It functions in the pathway lipid metabolism; phospholipid metabolism. In terms of biological role, catalyzes the reversible formation of acyl-phosphate (acyl-PO(4)) from acyl-[acyl-carrier-protein] (acyl-ACP). This enzyme utilizes acyl-ACP as fatty acyl donor, but not acyl-CoA. The polypeptide is Phosphate acyltransferase (Campylobacter concisus (strain 13826)).